The chain runs to 200 residues: MAFVQEPLPYDFNALEQYGMKGETFEYHYGKHHKAYVDNLNKLTDGTELADKSLEEVIQIAFKDASKAGIFNNAAQVWNHTFFWNSLKPAGGGAPTGEFAAKINQDFGSFDKLKEEFSNAAATQFGSGWAWLIDDGGTLKVTKTPNAENPLAHGQKALLTLDVWEHAYYIDFRNARPAFIKNYLDNLVNWDFAAANYAKA.

Positions 28, 80, 162, and 166 each coordinate Fe cation.

The protein belongs to the iron/manganese superoxide dismutase family. As to quaternary structure, homodimer. Requires Fe cation as cofactor.

It carries out the reaction 2 superoxide + 2 H(+) = H2O2 + O2. Its function is as follows. Destroys superoxide anion radicals which are normally produced within the cells and which are toxic to biological systems. This Nostoc sp. (strain PCC 7120 / SAG 25.82 / UTEX 2576) protein is Superoxide dismutase [Fe] (sodB).